A 641-amino-acid chain; its full sequence is Chaperone protein DnaK (641 aa).

Thr-198 bears the Phosphothreonine; by autocatalysis mark. Basic and acidic residues-rich tracts occupy residues 514–529 (AEAN…EGVE), 540–554 (SSEK…KVSE), and 608–621 (AHAD…RSGD). 2 disordered regions span residues 514–554 (AEAN…KVSE) and 604–641 (QTES…KRSA). Residues 622–633 (DVVDADYEEVKD) are compositionally biased toward acidic residues.

This sequence belongs to the heat shock protein 70 family.

Acts as a chaperone. This Sinorhizobium medicae (strain WSM419) (Ensifer medicae) protein is Chaperone protein DnaK.